The following is a 761-amino-acid chain: Ribonucleoside-diphosphate reductase subunit alpha (761 aa).

The region spanning 5-95 is the ATP-cone domain; the sequence is LFVTKRDGRK…IFHLRKKAYG (91 aa). ATP contacts are provided by residues lysine 9, 15–21, threonine 55, and lysine 91; that span reads EKINLDK. Position 209 (threonine 209) interacts with GDP. An intrachain disulfide couples cysteine 225 to cysteine 462. Residues 232-234, arginine 262, and arginine 269 each bind dTTP; that span reads DSL. Asparagine 437 contacts GDP. Residue asparagine 437 is the Proton acceptor of the active site. Cysteine 439 acts as the Cysteine radical intermediate in catalysis. GDP-binding positions include glutamate 441 and 623-625; that span reads ETS. Catalysis depends on glutamate 441, which acts as the Proton acceptor.

This sequence belongs to the ribonucleoside diphosphate reductase large chain family. In terms of assembly, tetramer of two alpha and two beta subunits.

The enzyme catalyses a 2'-deoxyribonucleoside 5'-diphosphate + [thioredoxin]-disulfide + H2O = a ribonucleoside 5'-diphosphate + [thioredoxin]-dithiol. With respect to regulation, under complex allosteric control mediated by deoxynucleoside triphosphates and ATP binding to separate specificity and activation sites on the alpha subunit. The type of nucleotide bound at the specificity site determines substrate preference. It seems probable that ATP makes the enzyme reduce CDP and UDP, dGTP favors ADP reduction and dTTP favors GDP reduction. Stimulated by ATP and inhibited by dATP binding to the activity site. Functionally, provides the precursors necessary for DNA synthesis. Catalyzes the biosynthesis of deoxyribonucleotides from the corresponding ribonucleotides. In Buchnera aphidicola subsp. Acyrthosiphon pisum (strain APS) (Acyrthosiphon pisum symbiotic bacterium), this protein is Ribonucleoside-diphosphate reductase subunit alpha (nrdA).